The sequence spans 298 residues: Ethylmalonyl-CoA decarboxylase (298 aa).

Belongs to the enoyl-CoA hydratase/isomerase family.

Its subcellular location is the cytoplasm. The protein localises to the cytosol. The enzyme catalyses (2S)-ethylmalonyl-CoA + H(+) = butanoyl-CoA + CO2. It catalyses the reaction (S)-methylmalonyl-CoA + H(+) = propanoyl-CoA + CO2. It carries out the reaction (2R)-ethylmalonyl-CoA + H(+) = butanoyl-CoA + CO2. Decarboxylates ethylmalonyl-CoA, a potentially toxic metabolite, to form butyryl-CoA, suggesting it might be involved in metabolite proofreading. Acts preferentially on (S)-ethylmalonyl-CoA but also has some activity on the (R)-isomer. Also has methylmalonyl-CoA decarboxylase activity at lower level. This is Ethylmalonyl-CoA decarboxylase (ECHDC1) from Gallus gallus (Chicken).